A 771-amino-acid polypeptide reads, in one-letter code: Semaphorin-3A (771 aa).

Positions 1 to 20 (MGWLTRIVCLFWGVLLTARA) are cleaved as a signal peptide. One can recognise a Sema domain in the interval 31-514 (RLKLSYKEML…STAGVAQLPL (484 aa)). An N-linked (GlcNAc...) asparagine glycan is attached at Asn-53. Cys-103 and Cys-114 are oxidised to a cystine. An N-linked (GlcNAc...) asparagine glycan is attached at Asn-125. 4 disulfides stabilise this stretch: Cys-132-Cys-141, Cys-269-Cys-381, Cys-293-Cys-341, and Cys-517-Cys-535. The region spanning 580-664 (PEERIIYGVE…GFIQTLLKVT (85 aa)) is the Ig-like C2-type domain. An N-linked (GlcNAc...) asparagine glycan is attached at Asn-590. Residues Cys-649 and Cys-722 are joined by a disulfide bond. Positions 728–737 (RDRKQRRQRP) are enriched in basic residues. Positions 728 to 771 (RDRKQRRQRPGHTPGNSNKWKHLQENKKGRNRRTHEFERAPRSV) are disordered. Positions 749-771 (HLQENKKGRNRRTHEFERAPRSV) are enriched in basic and acidic residues.

This sequence belongs to the semaphorin family. As to quaternary structure, interacts with PLXND1. Expressed in the dorsal root ganglia.

Its subcellular location is the secreted. Its function is as follows. Involved in the development of the olfactory system and in neuronal control of puberty. Induces the collapse and paralysis of neuronal growth cones. Could serve as a ligand that guides specific growth cones by a motility-inhibiting mechanism. Binds to the complex neuropilin-1/plexin-1. This chain is Semaphorin-3A (SEMA3A), found in Homo sapiens (Human).